The sequence spans 222 residues: Interleukin-12 subunit alpha (222 aa).

Positions 1 to 25 (MCPPRGLLLVAILVLLNHLDHLSLA) are cleaved as a signal peptide. Disulfide bonds link C40–C113, C67–C199, and C88–C126. N-linked (GlcNAc...) asparagine glycosylation is found at N42, N96, and N110.

The protein belongs to the IL-6 superfamily. In terms of assembly, heterodimer with IL12B; disulfide-linked. This heterodimer is known as interleukin IL-12. Heterodimer with EBI3/IL27B; not disulfide-linked. This heterodimer is known as interleukin IL-35. Interacts with NBR1; this interaction promotes IL-12 secretion.

The protein resides in the secreted. Functionally, heterodimerizes with IL12B to form the IL-12 cytokine or with EBI3/IL27B to form the IL-35 cytokine. IL-12 is primarily produced by professional antigen-presenting cells (APCs) such as B-cells and dendritic cells (DCs) as well as macrophages and granulocytes and regulates T-cell and natural killer-cell responses, induces the production of interferon-gamma (IFN-gamma), favors the differentiation of T-helper 1 (Th1) cells and is an important link between innate resistance and adaptive immunity. Mechanistically, exerts its biological effects through a receptor composed of IL12R1 and IL12R2 subunits. Binding to the receptor results in the rapid tyrosine phosphorylation of a number of cellular substrates including the JAK family kinases TYK2 and JAK2. In turn, recruited STAT4 gets phosphorylated and translocates to the nucleus where it regulates cytokine/growth factor responsive genes. As part of IL-35, plays essential roles in maintaining the immune homeostasis of the liver microenvironment and also functions as an immune-suppressive cytokine. Mediates biological events through unconventional receptors composed of IL12RB2 and gp130/IL6ST heterodimers or homodimers. Signaling requires the transcription factors STAT1 and STAT4, which form a unique heterodimer that binds to distinct DNA sites. The sequence is that of Interleukin-12 subunit alpha (IL12A) from Equus caballus (Horse).